A 2204-amino-acid chain; its full sequence is Non-reducing polyketide synthase CTB1 (2204 aa).

An N-terminal acylcarrier protein transacylase domain (SAT) region spans residues 11–250; it reads AFGDQTYDCS…TRLPITAPYH (240 aa). Residues 382–815 form the Ketosynthase family 3 (KS3) domain; it reads KSPIAILAAS…GGNTCLVLED (434 aa). Active-site for beta-ketoacyl synthase activity residues include Cys554, His689, and His734. Residues 923–1224 are malonyl-CoA:ACP transacylase (MAT) domain; that stretch reads AFTGQGSAFE…QTFASINKDK (302 aa). A product template (PT) domain region spans residues 1299–1619; sequence SSSIHKVITN…VPKRLMHYIV (321 aa). The segment at 1303-1439 is N-terminal hotdog fold; the sequence is HKVITNTITA…CKIRFGSLEK (137 aa). The PKS/mFAS DH domain occupies 1303–1616; sequence HKVITNTITA…LQGVPKRLMH (314 aa). His1336 serves as the catalytic Proton acceptor; for dehydratase activity. The interval 1468–1616 is C-terminal hotdog fold; the sequence is TYRFSKGMIY…LQGVPKRLMH (149 aa). The active-site Proton donor; for dehydratase activity is Asp1528. A disordered region spans residues 1625–1674; the sequence is KASGPPTEKKGSSPPVEKKASAPVAPTRPAIQRKNASIPPPATQVTPQNK. Over residues 1631–1644 the composition is skewed to basic and acidic residues; that stretch reads TEKKGSSPPVEKKA. Carrier domains lie at 1679–1756 and 1783–1865; these read PSVS…TRLS and DPSP…SGST. An O-(pantetheine 4'-phosphoryl)serine mark is found at Ser1716 and Ser1824. Positions 1864–1875 are enriched in polar residues; sequence STESFDSTTTKP. A disordered region spans residues 1864–1931; it reads STESFDSTTT…PPKGRIPPAW (68 aa). A compositionally biased stretch (low complexity) spans 1880–1895; that stretch reads ATPPLTDSSASSPPSS. The tract at residues 1945–2195 is thioesterase (TE) domain; sequence ILFLFPDGAG…SGAQMLVEHM (251 aa).

Pantetheine 4'-phosphate serves as cofactor.

It carries out the reaction 6 malonyl-CoA + acetyl-CoA + 6 H(+) = nor-toralactone + 6 CO2 + 7 CoA + 2 H2O. The protein operates within mycotoxin biosynthesis. Polyketide synthase; part of the gene cluster that mediates the biosynthesis of cercosporin, a light-activated, non-host-selective toxin. The perylenequinone chromophore of cercosporin absorbs light energy to attain an electronically-activated triplet state and produces active oxygen species such as the hydroxyl radical, superoxide, hydrogen peroxide or singlet oxygen upon reaction with oxygen molecules. These reactive oxygen species cause damage to various cellular components including lipids, proteins and nucleic acids. The first step of cercosporin biosynthesis is performed by the polyketide synthase CTB1 which catalyzes the formation of nor-toralactone. The starter unit acyltransferase (SAT) domain of CTB1 initiates polyketide extension by the selective utilization of acetyl-CoA, which is elongated to the heptaketide in the beta-ketoacyl synthase (KS) domain by successive condensations with six malonyl units introduced by the malonyl acyltransferase (MAT) domain. The product template (PT) domain catalyzes C4-C9 and C2-C11 aldol cyclizations and dehydrations to a trihydroxynaphthalene, which is thought to be delivered to the thioesterase (TE) domain for product release. The bifunctional enzyme CTB3 then methylates nor-toralactone to toralactone before conducting an unusual oxidative aromatic ring opening. The O-methyltransferase CTB2 further methylates the nascent OH-6 of the CBT3 product, blocking further oxidation at this site before the reductase CTB6 reduces the 2-oxopropyl ketone at position C7, giving naphthalene. The FAD-dependent monooxygenase CTB5 in concert with the multicopper oxidase CTB12 are responsible for homodimerization of naphthalene with CTB7 installing the dioxepine moiety, finally producing cercosporin. The fasciclin domain-containing protein CTB11 might act with CTB5 and CTB12 whereas the roles of CTB9 and CTB10 have still to be elucidated. The chain is Non-reducing polyketide synthase CTB1 from Cercospora beticola (Sugarbeet leaf spot fungus).